The following is a 468-amino-acid chain: H(+)/Cl(-) exchange transporter ClcA (468 aa).

The Cytoplasmic segment spans residues 1–32; it reads MIKRERIVKSVLAHVPKDAINQFVSRGSTPTS. A helical transmembrane segment spans residues 33 to 69; sequence FSVLFMAAIVGTLAGLVGTYFEIAVHFVSETRTEWLK. Residues 70–76 are Periplasmic-facing; the sequence is SEIGSVL. Residues 77–100 form a helical membrane-spanning segment; the sequence is PLWLAAILISGALAFIGYYLVNRF. Residues 106–110 carry the Selectivity filter part_1 motif; the sequence is GSGIP. Ser107 contacts chloride. Residues 109–116 constitute an intramembrane region (helical); that stretch reads IPEIEGAM. Residues 117–123 lie on the Cytoplasmic side of the membrane; it reads DNIRSVR. 2 consecutive transmembrane segments (helical) span residues 124 to 141 and 148 to 166; these read WWRV…ALGS and EGPT…TDIF. A Selectivity filter part_2 motif is present at residues 146-150; the sequence is GREGP. Topologically, residues 167–176 are cytoplasmic; sequence RVKDDDTRHS. 2 intramembrane regions (helical) span residues 177-189 and 193-201; these read LLAS…LAAA and PLAAIMFVV. At 202–214 the chain is on the cytoplasmic side; it reads EEMRPQFRYSLIS. A helical transmembrane segment spans residues 215–232; the sequence is IRAVIISAIMANIVFRAI. The Periplasmic segment spans residues 233–252; sequence NGQEAVITMPQYQSPELQSL. The helical transmembrane segment at 253-281 threads the bilayer; it reads WLFLLLGSLFGVFGVVFNKLITIAQDSFV. Topologically, residues 282–287 are cytoplasmic; that stretch reads ALHKND. The chain crosses the membrane as a helical span at residues 288-309; that stretch reads RKRYLITGTILGGVFGLLLLYV. Topologically, residues 310–329 are periplasmic; sequence PQLTGGGIGLIPDITNGNYS. 2 helical membrane passes run 330-349 and 355-376; these read ISIL…LCFG and GIFA…ASAD. The Selectivity filter part_3 motif lies at 355 to 359; the sequence is GIFAP. Ile356 and Phe357 together coordinate chloride. Residues 377 to 386 lie on the Periplasmic side of the membrane; that stretch reads MLLPSLTIEP. The helical intramembrane region spans 387–401; it reads GVFAIAGMGALFAAT. The segment at residues 402–404 is an intramembrane region (note=Loop between two helices); sequence VRA. The helical intramembrane region spans 405–416; that stretch reads PITGILLVIEMT. The segment at residues 417 to 421 is an intramembrane region (note=Loop between two helices); it reads NNYYL. A helical membrane pass occupies residues 422–438; it reads ILPLIITSLGAVIVAQL. Residues 439-468 are Cytoplasmic-facing; sequence LGGQPIYSQLLHRTLKNDKLRQQDLPENQA. Residue Tyr445 participates in chloride binding.

Belongs to the chloride channel (TC 2.A.49) family. ClcA subfamily. In terms of assembly, homodimer.

It is found in the cell inner membrane. It carries out the reaction 2 chloride(in) + H(+)(out) = 2 chloride(out) + H(+)(in). Proton-coupled chloride transporter. Functions as antiport system and exchanges two chloride ions for 1 proton. Probably acts as an electrical shunt for an outwardly-directed proton pump that is linked to amino acid decarboxylation, as part of the extreme acid resistance (XAR) response. The protein is H(+)/Cl(-) exchange transporter ClcA of Vibrio campbellii (strain ATCC BAA-1116).